Reading from the N-terminus, the 336-residue chain is Vomeronasal type-1 receptor 102 (336 aa).

Residues 1–42 (MVGVQICQGMTSEILFFSLQPQFSNMMNKNSRLHIDSNIRNT) are Extracellular-facing. The chain crosses the membrane as a helical span at residues 43–63 (FFTEIGIGVSANSLLLLFNIF). The Cytoplasmic segment spans residues 64–75 (KFIHGQRSRLTD). Residues 76–96 (LPIGLLSLINLLMLLIMACIA) traverse the membrane as a helical segment. Residues 97-120 (TDIFISCRRWDDIICKSLLYLYRT) lie on the Extracellular side of the membrane. Cys111 and Cys198 are joined by a disulfide. The chain crosses the membrane as a helical span at residues 121–140 (FRGLSLSTTCLLSVLQAIIL). The Cytoplasmic portion of the chain corresponds to 141 to 157 (SPRSSCLAKYKHKPPHH). The helical transmembrane segment at 158–178 (IFCAMLFLSVLYMFISSHLLL) threads the bilayer. Residues 179–213 (SIIATPNLTTNDFIHVSQSCSILPMSYLMQSMFST) are Extracellular-facing. N-linked (GlcNAc...) asparagine glycosylation occurs at Asn185. Residues 214–234 (LLAIRNVFLISLIVLSTWYMV) form a helical membrane-spanning segment. Topologically, residues 235-264 (ALLCRHRKQTRHLQDTSLSRKASPEQRATR) are cytoplasmic. Residues 265-285 (SILMLRSLFVLMSIFDSIVSC) traverse the membrane as a helical segment. Residues 286–296 (SRTMYLNDPTS) are Extracellular-facing. A helical membrane pass occupies residues 297–317 (YSIQLLVVHIYATVSPFVFMI). The Cytoplasmic segment spans residues 318–336 (TEKHIVNYLKSMYVRVLNV).

It belongs to the G-protein coupled receptor 1 family. Expressed in 1-4% of neurons of the vomeronasal organ. Only one pheromone receptor gene may be expressed in a particular neuron. Not expressed in the main olfactory epithelium.

It localises to the cell membrane. Its function is as follows. Putative pheromone receptor implicated in the regulation of social as well as reproductive behavior. This Rattus norvegicus (Rat) protein is Vomeronasal type-1 receptor 102 (Vom1r102).